A 74-amino-acid polypeptide reads, in one-letter code: Translation initiation factor IF-1 (74 aa).

Positions 1–73 (MAKKDDIIEF…TKGRITYRGK (73 aa)) constitute an S1-like domain.

Belongs to the IF-1 family. As to quaternary structure, component of the 30S ribosomal translation pre-initiation complex which assembles on the 30S ribosome in the order IF-2 and IF-3, IF-1 and N-formylmethionyl-tRNA(fMet); mRNA recruitment can occur at any time during PIC assembly.

It localises to the cytoplasm. In terms of biological role, one of the essential components for the initiation of protein synthesis. Stabilizes the binding of IF-2 and IF-3 on the 30S subunit to which N-formylmethionyl-tRNA(fMet) subsequently binds. Helps modulate mRNA selection, yielding the 30S pre-initiation complex (PIC). Upon addition of the 50S ribosomal subunit IF-1, IF-2 and IF-3 are released leaving the mature 70S translation initiation complex. This is Translation initiation factor IF-1 from Psychrobacter sp. (strain PRwf-1).